The chain runs to 519 residues: Protein nucleotidyltransferase YdiU (519 aa).

ATP is bound by residues glycine 101, glycine 103, arginine 104, lysine 124, aspartate 136, glycine 137, arginine 194, and arginine 201. Aspartate 271 serves as the catalytic Proton acceptor. Mg(2+) contacts are provided by asparagine 272 and aspartate 281. Position 281 (aspartate 281) interacts with ATP.

The protein belongs to the SELO family. Mg(2+) is required as a cofactor. It depends on Mn(2+) as a cofactor.

It catalyses the reaction L-seryl-[protein] + ATP = 3-O-(5'-adenylyl)-L-seryl-[protein] + diphosphate. The catalysed reaction is L-threonyl-[protein] + ATP = 3-O-(5'-adenylyl)-L-threonyl-[protein] + diphosphate. The enzyme catalyses L-tyrosyl-[protein] + ATP = O-(5'-adenylyl)-L-tyrosyl-[protein] + diphosphate. It carries out the reaction L-histidyl-[protein] + UTP = N(tele)-(5'-uridylyl)-L-histidyl-[protein] + diphosphate. It catalyses the reaction L-seryl-[protein] + UTP = O-(5'-uridylyl)-L-seryl-[protein] + diphosphate. The catalysed reaction is L-tyrosyl-[protein] + UTP = O-(5'-uridylyl)-L-tyrosyl-[protein] + diphosphate. In terms of biological role, nucleotidyltransferase involved in the post-translational modification of proteins. It can catalyze the addition of adenosine monophosphate (AMP) or uridine monophosphate (UMP) to a protein, resulting in modifications known as AMPylation and UMPylation. This is Protein nucleotidyltransferase YdiU from Azoarcus sp. (strain BH72).